We begin with the raw amino-acid sequence, 179 residues long: NADH-quinone oxidoreductase subunit I (179 aa).

4Fe-4S ferredoxin-type domains lie at 45-74 (RHPD…VEAA) and 90-119 (KVYE…LGNE). [4Fe-4S] cluster is bound by residues Cys-54, Cys-57, Cys-60, Cys-64, Cys-99, Cys-102, Cys-105, and Cys-109. Residues 146-179 (PQRREAQRTGKPVRLGFKVPKGPRPELEGVEYPR) form a disordered region. The span at 168 to 179 (PRPELEGVEYPR) shows a compositional bias: basic and acidic residues.

Belongs to the complex I 23 kDa subunit family. As to quaternary structure, NDH-1 is composed of 15 different subunits. Subunits NuoA, H, J, K, L, M, N constitute the membrane sector of the complex. Requires [4Fe-4S] cluster as cofactor.

The protein resides in the cell membrane. It carries out the reaction a quinone + NADH + 5 H(+)(in) = a quinol + NAD(+) + 4 H(+)(out). NDH-1 shuttles electrons from NADH, via FMN and iron-sulfur (Fe-S) centers, to quinones in the respiratory chain. The immediate electron acceptor for the enzyme in this species is believed to be ubiquinone. Couples the redox reaction to proton translocation (for every two electrons transferred, four hydrogen ions are translocated across the cytoplasmic membrane), and thus conserves the redox energy in a proton gradient. The polypeptide is NADH-quinone oxidoreductase subunit I (Deinococcus geothermalis (strain DSM 11300 / CIP 105573 / AG-3a)).